The primary structure comprises 150 residues: 3-dehydroquinate dehydratase (150 aa).

Tyr-26 functions as the Proton acceptor in the catalytic mechanism. Asn-77, His-83, and Asp-90 together coordinate substrate. His-103 functions as the Proton donor in the catalytic mechanism. Residues 104 to 105 (LS) and Arg-114 each bind substrate.

Belongs to the type-II 3-dehydroquinase family. In terms of assembly, homododecamer.

The catalysed reaction is 3-dehydroquinate = 3-dehydroshikimate + H2O. It participates in metabolic intermediate biosynthesis; chorismate biosynthesis; chorismate from D-erythrose 4-phosphate and phosphoenolpyruvate: step 3/7. Catalyzes a trans-dehydration via an enolate intermediate. In Citrobacter koseri (strain ATCC BAA-895 / CDC 4225-83 / SGSC4696), this protein is 3-dehydroquinate dehydratase.